The primary structure comprises 651 residues: Probable endo-1,3(4)-beta-glucanase NFIA_089530 (651 aa).

The signal sequence occupies residues 1–21 (MAPSSLFLSVGSLIASSLVSA). In terms of domain architecture, GH16 spans 36–289 (ESWQGESFIN…WAGNVFAEST (254 aa)). The N-linked (GlcNAc...) asparagine glycan is linked to asparagine 64. The Nucleophile role is filled by glutamate 145. The Proton donor role is filled by glutamate 150. N-linked (GlcNAc...) asparagine glycosylation is present at asparagine 200. Residues 364–378 (PVPAETTAVPQPAQT) are compositionally biased toward low complexity. Disordered regions lie at residues 364 to 422 (PVPA…ESTS) and 508 to 557 (SEIP…PVPA). Polar residues-rich tracts occupy residues 379-400 (NTVA…TTVP) and 520-535 (QAVS…TAQG). A compositionally biased stretch (low complexity) spans 542-557 (SIASASAAPSTIPVPA). Asparagine 629 carries the GPI-anchor amidated asparagine lipid modification. A propeptide spans 630-651 (GANRMSVGLSGLIGVMFIAALA) (removed in mature form).

The protein belongs to the glycosyl hydrolase 16 family.

The protein resides in the cell membrane. It catalyses the reaction Endohydrolysis of (1-&gt;3)- or (1-&gt;4)-linkages in beta-D-glucans when the glucose residue whose reducing group is involved in the linkage to be hydrolyzed is itself substituted at C-3.. Mixed-linked glucanase involved in the degradation of complex natural cellulosic substrates. The sequence is that of Probable endo-1,3(4)-beta-glucanase NFIA_089530 from Neosartorya fischeri (strain ATCC 1020 / DSM 3700 / CBS 544.65 / FGSC A1164 / JCM 1740 / NRRL 181 / WB 181) (Aspergillus fischerianus).